The sequence spans 1317 residues: DNA-directed RNA polymerase subunit beta' (1317 aa).

Residues cysteine 60, cysteine 62, cysteine 75, and cysteine 78 each coordinate Zn(2+). 3 residues coordinate Mg(2+): aspartate 535, aspartate 537, and aspartate 539. 4 residues coordinate Zn(2+): cysteine 890, cysteine 967, cysteine 974, and cysteine 977.

This sequence belongs to the RNA polymerase beta' chain family. The RNAP catalytic core consists of 2 alpha, 1 beta, 1 beta' and 1 omega subunit. When a sigma factor is associated with the core the holoenzyme is formed, which can initiate transcription. It depends on Mg(2+) as a cofactor. Zn(2+) is required as a cofactor.

The enzyme catalyses RNA(n) + a ribonucleoside 5'-triphosphate = RNA(n+1) + diphosphate. DNA-dependent RNA polymerase catalyzes the transcription of DNA into RNA using the four ribonucleoside triphosphates as substrates. This is DNA-directed RNA polymerase subunit beta' from Mycolicibacterium smegmatis (strain ATCC 700084 / mc(2)155) (Mycobacterium smegmatis).